The chain runs to 1861 residues: Amylopullulanase (1861 aa).

An N-terminal signal peptide occupies residues 1–35; that stretch reads MNKKLFTNRFISFNMSLLLVLTAVFSSIPLHSVHA. Ca(2+)-binding residues include aspartate 248, asparagine 250, aspartate 288, aspartate 343, asparagine 401, aspartate 403, asparagine 406, aspartate 407, and aspartate 453. Substrate contacts are provided by histidine 526 and arginine 626. Aspartate 628 serves as the catalytic Nucleophile. Catalysis depends on glutamate 657, which acts as the Proton donor. Residues 733 to 734, aspartate 793, and arginine 797 contribute to the substrate site; that span reads HD. Fibronectin type-III domains follow at residues 929–1021 and 1158–1252; these read APQA…AYPI and KPTA…VVPI. The region spanning 1246–1354 is the CBM20 domain; that stretch reads KPDVVPIKVI…INDTVYRWRD (109 aa). A disordered region spans residues 1448–1486; that stretch reads QENNSGSGTGNNNTSTSGSNSSSTGSGSTGSTSITSNIS. The segment covering 1450–1486 has biased composition (low complexity); it reads NNSGSGTGNNNTSTSGSNSSSTGSGSTGSTSITSNIS. SLH domains lie at 1677–1740, 1741–1799, and 1802–1861; these read EYDK…YSGE, FSDV…KEEN, and ATTF…SGNI.

The protein belongs to the glycosyl hydrolase 13 family. The cofactor is Ca(2+). Glycosylated.

It is found in the secreted. The protein resides in the cell wall. The enzyme catalyses Endohydrolysis of (1-&gt;4)-alpha-D-glucosidic linkages in polysaccharides containing three or more (1-&gt;4)-alpha-linked D-glucose units.. The catalysed reaction is Hydrolysis of (1-&gt;6)-alpha-D-glucosidic linkages in pullulan, amylopectin and glycogen, and in the alpha- and beta-limit dextrins of amylopectin and glycogen.. In Thermoanaerobacterium thermosulfurigenes (Clostridium thermosulfurogenes), this protein is Amylopullulanase (amyB).